The primary structure comprises 190 residues: Venom nerve growth factor (190 aa).

The first 7 residues, 1–7 (FLIGIWA), serve as a signal peptide directing secretion. The propeptide occupies 8–111 (APKSEDNVPL…SLNRNIRAKR (104 aa)). A disulfide bridge connects residues Cys-125 and Cys-190. N-linked (GlcNAc...) asparagine glycosylation occurs at Asn-134.

It belongs to the NGF-beta family. As to quaternary structure, homodimer; non-covalently linked. Post-translationally, glycosylated. Expressed by the venom gland.

It is found in the secreted. In terms of biological role, nerve growth factor is important for the development and maintenance of the sympathetic and sensory nervous systems. It stimulates division and differentiation of sympathetic and embryonic sensory neurons as well as basal forebrain cholinergic neurons in the brain. Its relevance in the snake venom is not clear. However, it has been shown to inhibit metalloproteinase-dependent proteolysis of platelet glycoprotein Ib alpha, suggesting a metalloproteinase inhibition to prevent metalloprotease autodigestion and/or protection against prey proteases. Binds a lipid between the two protein chains in the homodimer. The lipid-bound form promotes histamine relase from mouse mast cells, contrary to the lipid-free form. This Agkistrodon contortrix contortrix (Southern copperhead) protein is Venom nerve growth factor.